Reading from the N-terminus, the 430-residue chain is Serine--tRNA ligase (430 aa).

Residue threonine 234–glutamate 236 participates in L-serine binding. Arginine 265–glutamate 267 serves as a coordination point for ATP. Glutamate 288 contacts L-serine. Glutamate 352–serine 355 lines the ATP pocket. Position 388 (serine 388) interacts with L-serine.

Belongs to the class-II aminoacyl-tRNA synthetase family. Type-1 seryl-tRNA synthetase subfamily. As to quaternary structure, homodimer. The tRNA molecule binds across the dimer.

The protein resides in the cytoplasm. It carries out the reaction tRNA(Ser) + L-serine + ATP = L-seryl-tRNA(Ser) + AMP + diphosphate + H(+). The catalysed reaction is tRNA(Sec) + L-serine + ATP = L-seryl-tRNA(Sec) + AMP + diphosphate + H(+). It functions in the pathway aminoacyl-tRNA biosynthesis; selenocysteinyl-tRNA(Sec) biosynthesis; L-seryl-tRNA(Sec) from L-serine and tRNA(Sec): step 1/1. Its function is as follows. Catalyzes the attachment of serine to tRNA(Ser). Is also able to aminoacylate tRNA(Sec) with serine, to form the misacylated tRNA L-seryl-tRNA(Sec), which will be further converted into selenocysteinyl-tRNA(Sec). The polypeptide is Serine--tRNA ligase (Thermosynechococcus vestitus (strain NIES-2133 / IAM M-273 / BP-1)).